A 398-amino-acid polypeptide reads, in one-letter code: Basic helix-loop-helix neural transcription factor TAP (398 aa).

Disordered regions lie at residues 35–59 (ETEA…IPQP) and 102–144 (RATN…RSRS). The span at 127 to 141 (RPKRKYAVGKNRVTR) shows a compositional bias: basic residues. The bHLH domain maps to 154–206 (FRRMKANDRERNRMHNLNDALEKLRVTLPSLPEETKLTKIEILRFAHNYIFAL). Disordered regions lie at residues 265-333 (AQHQ…QQFS) and 361-398 (QQSS…APQV). Low complexity predominate over residues 307–333 (HQQQQQPHQPHHLQPNPQQESSPQQFS). Over residues 361–370 (QQSSFYSQTP) the composition is skewed to polar residues.

In terms of tissue distribution, expressed in neuronal and glial precursors during differentiation. In the peripheral nervous system, expression is exclusively in one of the neurons that innervate each larval chemosensory organ. Expressed at a late stage in the development of one type of adult chemosensory organ, the gustatory bristles of the leg, wing and proboscis. Expressed very early in the development of a second type of chemosensory receptors, the olfactory organs of the antenna.

The protein localises to the nucleus. Its function is as follows. May play a role in the specification of the sugar-sensitive adult gustatory neuron and affect the response to sugar and salt. Regulated by POXN. The protein is Basic helix-loop-helix neural transcription factor TAP (tap) of Drosophila melanogaster (Fruit fly).